The following is a 323-amino-acid chain: 4-hydroxyphenylpyruvate 3-dimethylallyltransferase (323 aa).

Positions 160 and 281 each coordinate substrate.

Belongs to the aromatic prenyltransferase family. As to quaternary structure, monomer.

It is found in the cytoplasm. It carries out the reaction 3-(4-hydroxyphenyl)pyruvate + dimethylallyl diphosphate = 3-dimethylallyl-4-hydroxyphenylpyruvate + diphosphate. Its pathway is antibiotic biosynthesis; novobiocin biosynthesis. Functionally, magnesium-independent aromatic prenyltransferase that catalyzes the irreversible transfer of a dimethylallyl group to 4-hydroxyphenylpyruvate to produce the ring A structure in the novobiocin biosynthesis pathway. Novobiocin is an aminocoumarin family antibiotic that targets bacterial DNA gyrases. It is able to prenylate many different compounds, including the phenylpropanoids 4-coumarate and caffeate, the plant polyketide resveratrol, the (iso)flavonoid naringenin, apigenin, daidzein and genistein, and the dihydroxynaphthalenes 1,6-DHN and 2,7-DHN. The polypeptide is 4-hydroxyphenylpyruvate 3-dimethylallyltransferase (Streptomyces niveus (Streptomyces spheroides)).